The sequence spans 336 residues: Potassium channel subfamily K member 1 (336 aa).

Topologically, residues 1–20 (MLQSLAGSSCVRLVERHRSA) are cytoplasmic. Residues 21 to 41 (WCFGFLVLGYLLYLVFGAVVF) traverse the membrane as a helical segment. Residues 42–103 (SSVELPYEDL…SNASGNWNWD (62 aa)) lie on the Extracellular side of the membrane. Asn-95 is a glycosylation site (N-linked (GlcNAc...) asparagine). Residues 104–116 (FTSALFFASTVLS) constitute an intramembrane region (helical). Residues 117-122 (TTGYGH) lie within the membrane without spanning it. The segment at 117–122 (TTGYGH) is selectivity filter 1. Residues 123-132 (TVPLSDGGKA) lie on the Extracellular side of the membrane. A helical membrane pass occupies residues 133–156 (FCIIYSVIGIPFTLLFLTAVVQRI). The Cytoplasmic portion of the chain corresponds to 157–181 (TVHVTRRPVLYFHIRWGFSKQVVAI). The chain crosses the membrane as a helical span at residues 182–202 (VHAVLLGFVTVSCFFFIPAAV). Residues 203 to 211 (FSVLEDDWN) are Extracellular-facing. Residues 212–224 (FLESFYFCFISLS) constitute an intramembrane region (helical). The tract at residues 225 to 230 (TIGLGD) is selectivity filter 2. The stretch at 225–231 (TIGLGDY) is an intramembrane region. At 232–243 (VPGEGYNQKFRE) the chain is on the extracellular side. The helical transmembrane segment at 244–267 (LYKIGITCYLLLGLIAMLVVLETF) threads the bilayer. The Cytoplasmic portion of the chain corresponds to 268–336 (CELHELKKFR…SACVDGPANH (69 aa)). Lys-274 participates in a covalent cross-link: Glycyl lysine isopeptide (Lys-Gly) (interchain with G-Cter in SUMO). Residues 293 to 299 (IIEHDQL) form an important for intracellular retention in recycling endosomes region. Ser-326 bears the Phosphoserine mark.

The protein belongs to the two pore domain potassium channel (TC 1.A.1.8) family. Homodimer; disulfide-linked. Heterodimer with KCNK2; disulfide-linked. In astrocytes, forms mostly heterodimeric potassium channels with KCNK2, with only a minor proportion of functional channels containing homodimeric KCNK1. Interacts with KCNK3 and KCNK9, forming functional heterodimeric channels. Interacts with GNG4. Identified in a complex with PSD and ARF6; interacts only with PSD that is bound to ARF6. Interacts with UBE2I. Sumoylation is controversial. Sumoylated by UBE2I. Not sumoylated when expressed in xenopus oocytes or mammalian cells. Sumoylation inactivates the channel, but does not interfere with expression at the cell membrane. Sumoylation of a single subunit is sufficient to silence the dimeric channel. Sumoylation of KCNK1 is sufficient to silence heterodimeric channels formed by KCNK1 and KCNK3 or KCNK9. Desumoylated by SENP1; this activates the channel. Desumoylated by SENP1; this strongly increases halothane-mediated activation of heterodimeric channels formed with KCNK9. SENP1 treatment has no effect. In terms of tissue distribution, detected in bronchial epithelial cells. Detected in heart left atrium and left ventricle. Detected in cardiac myocytes (at protein level). Widely expressed with high levels in heart, brain and kidney, and lower levels in colon, ovary, placenta, lung and liver. Highly expressed in cerebellum, and detected at lower levels in amygdala, caudate nucleus, brain cortex, hippocampus, putamen, substantia nigra, thalamus, dorsal root ganglion, spinal cord, pituitary, heart, kidney, lung, placenta, pancreas, stomach, small intestine, uterus and prostate. Detected in right and left heart ventricle and atrium, and in heart Purkinje fibers.

The protein localises to the cell membrane. The protein resides in the recycling endosome. Its subcellular location is the synaptic cell membrane. It is found in the cytoplasmic vesicle. It localises to the perikaryon. The protein localises to the cell projection. The protein resides in the dendrite. Its subcellular location is the apical cell membrane. The enzyme catalyses K(+)(in) = K(+)(out). The catalysed reaction is NH4(+)(in) = NH4(+)(out). It catalyses the reaction Na(+)(in) = Na(+)(out). It carries out the reaction Rb(+)(in) = Rb(+)(out). The enzyme catalyses Cs(+)(in) = Cs(+)(out). The catalysed reaction is Li(+)(in) = Li(+)(out). It catalyses the reaction L-glutamate(out) = L-glutamate(in). It carries out the reaction chloride(in) = chloride(out). Its activity is regulated as follows. Inhibited by Ba(2+) ions and quinidine. Inhibited by quinine. Is slightly inhibited by 10 mM tetraethylammonium (TEA), and only marginally inhibited by 4-aminopyridine, charybdotoxin and dendrotoxin. Lowering the extracellular pH to below 6.5 transiently activates the channel, and then inhibits channel activity. Inhibited when the intracellular pH is decreased down to pH 6.0, but this may be due to indirect effects. Functionally, ion channel that contributes to passive transmembrane potassium transport and to the regulation of the resting membrane potential in brain astrocytes, but also in kidney and in other tissues. Forms dimeric channels through which potassium ions pass in accordance with their electrochemical gradient. The channel is selective for K(+) ions at physiological potassium concentrations and at neutral pH, but becomes permeable to Na(+) at subphysiological K(+) levels and upon acidification of the extracellular medium. The homodimer has very low potassium channel activity, when expressed in heterologous systems, and can function as weakly inward rectifying potassium channel. Channel activity is modulated by activation of serotonin receptors. Heterodimeric channels containing KCNK1 and KCNK2 have much higher activity, and may represent the predominant form in astrocytes. Heterodimeric channels containing KCNK1 and KCNK3 or KCNK9 have much higher activity. Heterodimeric channels formed by KCNK1 and KCNK9 may contribute to halothane-sensitive currents. Mediates outward rectifying potassium currents in dentate gyrus granule cells and contributes to the regulation of their resting membrane potential. Contributes to the regulation of action potential firing in dentate gyrus granule cells and down-regulates their intrinsic excitability. In astrocytes, the heterodimer formed by KCNK1 and KCNK2 is required for rapid glutamate release in response to activation of G-protein coupled receptors, such as F2R and CNR1. Required for normal ion and water transport in the kidney. Contributes to the regulation of the resting membrane potential of pancreatic beta cells. The low channel activity of homodimeric KCNK1 may be due to sumoylation. The low channel activity may be due to rapid internalization from the cell membrane and retention in recycling endosomes. Permeable to monovalent cations with ion selectivity for K(+) &gt; Rb(+) &gt;&gt; NH4(+) &gt;&gt; Cs(+) = Na(+) = Li(+). The polypeptide is Potassium channel subfamily K member 1 (KCNK1) (Homo sapiens (Human)).